The following is a 490-amino-acid chain: Bifunctional protein HldE (490 aa).

Residues 1–330 (MFSFDALLQA…RRILPHASLA (330 aa)) form a ribokinase region. Residue 205-208 (NRKE) coordinates ATP. Asp275 is a catalytic residue. Residues 358–490 (FTNGCFDILH…LVARAREGQS (133 aa)) form a cytidylyltransferase region.

It in the N-terminal section; belongs to the carbohydrate kinase PfkB family. In the C-terminal section; belongs to the cytidylyltransferase family. In terms of assembly, homodimer.

It catalyses the reaction D-glycero-beta-D-manno-heptose 7-phosphate + ATP = D-glycero-beta-D-manno-heptose 1,7-bisphosphate + ADP + H(+). The enzyme catalyses D-glycero-beta-D-manno-heptose 1-phosphate + ATP + H(+) = ADP-D-glycero-beta-D-manno-heptose + diphosphate. It functions in the pathway nucleotide-sugar biosynthesis; ADP-L-glycero-beta-D-manno-heptose biosynthesis; ADP-L-glycero-beta-D-manno-heptose from D-glycero-beta-D-manno-heptose 7-phosphate: step 1/4. The protein operates within nucleotide-sugar biosynthesis; ADP-L-glycero-beta-D-manno-heptose biosynthesis; ADP-L-glycero-beta-D-manno-heptose from D-glycero-beta-D-manno-heptose 7-phosphate: step 3/4. In terms of biological role, catalyzes the phosphorylation of D-glycero-D-manno-heptose 7-phosphate at the C-1 position to selectively form D-glycero-beta-D-manno-heptose-1,7-bisphosphate. Its function is as follows. Catalyzes the ADP transfer from ATP to D-glycero-beta-D-manno-heptose 1-phosphate, yielding ADP-D-glycero-beta-D-manno-heptose. The sequence is that of Bifunctional protein HldE from Rhodopseudomonas palustris (strain ATCC BAA-98 / CGA009).